The primary structure comprises 527 residues: V-set and immunoglobulin domain-containing protein 10 (527 aa).

An N-terminal signal peptide occupies residues 1-13; the sequence is MWTRRWIQFLVLC. 4 Ig-like C2-type domains span residues 14–111, 123–212, 216–306, and 310–399; these read LHLW…LKVS, PTRT…RQLL, PPIT…CQIQ, and PLLE…KEIN. The Extracellular portion of the chain corresponds to 23 to 409; it reads YLGVFRGDVN…VWLTVNKPHN (387 aa). N-linked (GlcNAc...) asparagine glycans are attached at residues N32, N41, N52, N64, N74, N90, N129, N139, N191, N206, N226, N260, N276, N325, N346, and N375. A disulfide bond links C144 and C194. A disulfide bond links C238 and C288. The cysteines at positions 330 and 387 are disulfide-linked. A helical transmembrane segment spans residues 410–430; it reads IVGLVTALLLLFLLVVAIITG. Residues 431–527 are Cytoplasmic-facing; the sequence is TVLYCDPQIY…TGEENQNEEI (97 aa). Residues 501–527 form a disordered region; it reads RPPESTSSDLFSEVSDDTGEENQNEEI. Over residues 514–527 the composition is skewed to acidic residues; the sequence is VSDDTGEENQNEEI.

The protein resides in the membrane. This chain is V-set and immunoglobulin domain-containing protein 10 (vsig10), found in Xenopus laevis (African clawed frog).